Reading from the N-terminus, the 27-residue chain is uncharacterized protein (27 aa).

The protein localises to the plastid. The protein resides in the chloroplast. This is an uncharacterized protein from Marchantia polymorpha (Common liverwort).